The sequence spans 96 residues: GLSDGEWQLVLNVWGKVEADLAGHGQEVLIRLFKGHPETLEKFDKFKHLKSEKGSEDLKKHGNTVETALEGILKKKALELFKNDIAAKTKELGFLG.

Residues 1–96 form the Globin domain; it reads GLSDGEWQLV…AKTKELGFLG (96 aa). At serine 3 the chain carries Phosphoserine. A nitrite-binding site is contributed by histidine 61. Histidine 61 serves as a coordination point for O2. Threonine 64 carries the post-translational modification Phosphothreonine.

The protein belongs to the globin family. In terms of assembly, monomeric.

The protein resides in the cytoplasm. Its subcellular location is the sarcoplasm. The enzyme catalyses Fe(III)-heme b-[protein] + nitric oxide + H2O = Fe(II)-heme b-[protein] + nitrite + 2 H(+). It carries out the reaction H2O2 + AH2 = A + 2 H2O. Functionally, monomeric heme protein which primary function is to store oxygen and facilitate its diffusion within muscle tissues. Reversibly binds oxygen through a pentacoordinated heme iron and enables its timely and efficient release as needed during periods of heightened demand. Depending on the oxidative conditions of tissues and cells, and in addition to its ability to bind oxygen, it also has a nitrite reductase activity whereby it regulates the production of bioactive nitric oxide. Under stress conditions, like hypoxia and anoxia, it also protects cells against reactive oxygen species thanks to its pseudoperoxidase activity. The chain is Myoglobin (MB) from Ailuropoda melanoleuca (Giant panda).